The primary structure comprises 507 residues: Glycerol kinase (507 aa).

Position 14 (Thr-14) interacts with ADP. Thr-14, Thr-15, and Ser-16 together coordinate ATP. Sn-glycerol 3-phosphate is bound at residue Thr-14. Position 18 (Arg-18) interacts with ADP. The sn-glycerol 3-phosphate site is built by Arg-84, Glu-85, Tyr-136, and Asp-246. 5 residues coordinate glycerol: Arg-84, Glu-85, Tyr-136, Asp-246, and Gln-247. Thr-268 and Gly-311 together coordinate ADP. The ATP site is built by Thr-268, Gly-311, Gln-315, and Gly-412. ADP contacts are provided by Gly-412 and Asn-416.

This sequence belongs to the FGGY kinase family.

The enzyme catalyses glycerol + ATP = sn-glycerol 3-phosphate + ADP + H(+). Its pathway is polyol metabolism; glycerol degradation via glycerol kinase pathway; sn-glycerol 3-phosphate from glycerol: step 1/1. With respect to regulation, inhibited by fructose 1,6-bisphosphate (FBP). In terms of biological role, key enzyme in the regulation of glycerol uptake and metabolism. Catalyzes the phosphorylation of glycerol to yield sn-glycerol 3-phosphate. The protein is Glycerol kinase of Vibrio atlanticus (strain LGP32) (Vibrio splendidus (strain Mel32)).